Consider the following 378-residue polypeptide: Merozoite surface protein P41 (378 aa).

The signal sequence occupies residues 1-20; sequence MKGVIFCLVVLLWRQAWVSS. Positions 21–133 constitute a 6-Cys 1 domain; it reads KSHKCDFTKE…LKINRFLKDD (113 aa). 3 disulfide bridges follow: cysteine 25–cysteine 42, cysteine 56–cysteine 113, and cysteine 64–cysteine 111. Asparagine 77, asparagine 149, asparagine 182, and asparagine 205 each carry an N-linked (GlcNAc...) asparagine glycan. Positions 241-375 constitute a 6-Cys 2 domain; it reads VIKGCDFGNN…GESEVVLNSF (135 aa). Intrachain disulfides connect cysteine 245–cysteine 270, cysteine 284–cysteine 348, and cysteine 297–cysteine 346. Residue asparagine 351 is glycosylated (N-linked (GlcNAc...) asparagine).

As to quaternary structure, heterodimer; heterodimerizes with PF12. May form an antiparallel heterodimer with PF12. Processed into a soluble form.

It localises to the cell surface. Its subcellular location is the cell membrane. The polypeptide is Merozoite surface protein P41 (PF41) (Plasmodium falciparum (isolate 3D7)).